A 227-amino-acid polypeptide reads, in one-letter code: Orotidine 5'-phosphate decarboxylase (227 aa).

Residues Asp8, Lys30, 57–66 (DLKFHDIPNT), Thr116, Arg177, Gln186, Gly206, and Arg207 contribute to the substrate site. Lys59 serves as the catalytic Proton donor.

Belongs to the OMP decarboxylase family. Type 1 subfamily. As to quaternary structure, homodimer.

It catalyses the reaction orotidine 5'-phosphate + H(+) = UMP + CO2. Its pathway is pyrimidine metabolism; UMP biosynthesis via de novo pathway; UMP from orotate: step 2/2. Catalyzes the decarboxylation of orotidine 5'-monophosphate (OMP) to uridine 5'-monophosphate (UMP). The polypeptide is Orotidine 5'-phosphate decarboxylase (Acinetobacter baylyi (strain ATCC 33305 / BD413 / ADP1)).